Here is a 164-residue protein sequence, read N- to C-terminus: Diphosphoinositol polyphosphate phosphohydrolase 3-alpha (164 aa).

Substrate contacts are provided by residues R9, 17–19, and 38–40; these read KKR and SSR. The Nudix hydrolase domain maps to 17–144; it reads KKRAACLCFR…VHAEYLEKLK (128 aa). Mg(2+) is bound by residues G49 and E65. A Nudix box motif is present at residues 50-71; that stretch reads GGMEPEEEPGGAAVREVYEEAG. E68 acts as the Proton acceptor in catalysis. E69 contributes to the Mg(2+) binding site. Residues 89 to 91, R115, and K133 contribute to the substrate site; that span reads PKH. The disordered stretch occupies residues 144–164; it reads KLGGSPTNGNSMAPSSPDSDP. The span at 148–164 shows a compositional bias: polar residues; that stretch reads SPTNGNSMAPSSPDSDP.

It belongs to the Nudix hydrolase family. DIPP subfamily. Mg(2+) is required as a cofactor. It depends on Mn(2+) as a cofactor. As to expression, mainly expressed in testis and, at lower level in brain. According to PubMed:12121577, it is widely expressed.

It localises to the cytoplasm. The enzyme catalyses diphospho-myo-inositol polyphosphate + H2O = myo-inositol polyphosphate + phosphate.. The catalysed reaction is P(1),P(6)-bis(5'-adenosyl) hexaphosphate + H2O = adenosine 5'-pentaphosphate + AMP + 2 H(+). It catalyses the reaction P(1),P(5)-bis(5'-adenosyl) pentaphosphate + H2O = adenosine 5'-tetraphosphate + AMP + 2 H(+). In terms of biological role, cleaves a beta-phosphate from the diphosphate groups in PP-InsP5 (diphosphoinositol pentakisphosphate), suggesting that it may play a role in signal transduction. Also able to catalyze the hydrolysis of dinucleoside oligophosphates, with Ap6A and Ap5A being the preferred substrates. The major reaction products are ADP and p4a from Ap6A and ADP and ATP from Ap5A. Also able to hydrolyze 5-phosphoribose 1-diphosphate. In Homo sapiens (Human), this protein is Diphosphoinositol polyphosphate phosphohydrolase 3-alpha (NUDT10).